We begin with the raw amino-acid sequence, 156 residues long: Small ribosomal subunit protein uS7 (156 aa).

It belongs to the universal ribosomal protein uS7 family. In terms of assembly, part of the 30S ribosomal subunit. Contacts proteins S9 and S11.

Functionally, one of the primary rRNA binding proteins, it binds directly to 16S rRNA where it nucleates assembly of the head domain of the 30S subunit. Is located at the subunit interface close to the decoding center, probably blocks exit of the E-site tRNA. This chain is Small ribosomal subunit protein uS7, found in Clostridium beijerinckii (strain ATCC 51743 / NCIMB 8052) (Clostridium acetobutylicum).